The chain runs to 29 residues: NAD(P)H-quinone oxidoreductase subunit 5, chloroplastic (29 aa).

A helical transmembrane segment spans residues 1–15 (SGSIIHSMEANVGYS).

The protein belongs to the complex I subunit 5 family. In terms of assembly, NDH is composed of at least 16 different subunits, 5 of which are encoded in the nucleus.

The protein resides in the plastid. It localises to the chloroplast thylakoid membrane. The enzyme catalyses a plastoquinone + NADH + (n+1) H(+)(in) = a plastoquinol + NAD(+) + n H(+)(out). It catalyses the reaction a plastoquinone + NADPH + (n+1) H(+)(in) = a plastoquinol + NADP(+) + n H(+)(out). NDH shuttles electrons from NAD(P)H:plastoquinone, via FMN and iron-sulfur (Fe-S) centers, to quinones in the photosynthetic chain and possibly in a chloroplast respiratory chain. The immediate electron acceptor for the enzyme in this species is believed to be plastoquinone. Couples the redox reaction to proton translocation, and thus conserves the redox energy in a proton gradient. This chain is NAD(P)H-quinone oxidoreductase subunit 5, chloroplastic, found in Pseudotsuga menziesii (Douglas-fir).